The following is a 1076-amino-acid chain: Ribosome quality control complex subunit NEMF (1076 aa).

Thr7 carries the phosphothreonine modification. Positions 296 to 359 (VDEFYSKIEG…LIEMNLQIVD (64 aa)) form a coiled coil. Ser417 bears the Phosphoserine mark. Positions 420 to 453 (EDDDVDGDVNVEKNETEPPKGKKKKQKNKQLQKP) are disordered. Positions 429–439 (NVEKNETEPPK) are enriched in basic and acidic residues. The span at 440-449 (GKKKKQKNKQ) shows a compositional bias: basic residues. A coiled-coil region spans residues 483 to 514 (AAKKTQKTVEAAEKAFKSAEKKTKQTLKEVQT). Acidic residues-rich tracts occupy residues 691 to 710 (ISEEMEQLDGGDTSSDEDKE) and 742 to 754 (LIQEESSEDEGEY). Disordered regions lie at residues 691-715 (ISEEMEQLDGGDTSSDEDKEEHETP) and 742-972 (LIQE…DLDQ). 3 positions are modified to phosphoserine: Ser747, Ser748, and Ser763. Over residues 755–768 (EEVRKDQDSVGEMK) the composition is skewed to basic and acidic residues. Residues 777-795 (YPDTTIDLSHLQPQRSIQK) are compositionally biased toward polar residues. Ser831 bears the Phosphoserine mark. The span at 839–854 (LEGKDKEKESTVHIET) shows a compositional bias: basic and acidic residues. Positions 869 to 894 (KRGQKSKMKKMKEKYKDQDEEDRELI) form a coiled coil. Basic residues predominate over residues 870–881 (RGQKSKMKKMKE). The span at 937–965 (DNIKKETPFLEVITHELQDFAVDDPHDDK) shows a compositional bias: basic and acidic residues.

Belongs to the NEMF family. As to quaternary structure, component of the ribosome quality control complex (RQC), composed of the E3 ubiquitin ligase LTN1, TCF25 and NEMF associated with the 60S ribosomal subunit. The complex probably also contains VCP/p97 and its ubiquitin-binding cofactors. Interacts (via its N-terminus) with XPO1. Expressed in brain, heart, liver, lung, spleen, and skeletal muscle. Also expressed at lower levels in stomach and testis.

Its subcellular location is the cytoplasm. The protein resides in the cytosol. The protein localises to the nucleus. Key component of the ribosome quality control complex (RQC), a ribosome-associated complex that mediates the extraction of incompletely synthesized nascent chains from stalled ribosomes as well as their ubiquitin-mediated proteasomal degradation. Thereby, frees 60S subunit ribosomes from the stalled translation complex and prevents the accumulation of nascent polypeptide chains that are potentially toxic for the cell. Within the RQC complex, NEMF specifically binds stalled 60S ribosomal subunits by recognizing an exposed, nascent chain-conjugated tRNA moiety and promotes the recruitment of LTN1 to stalled 60S subunits. Following binding to stalled 60S ribosomal subunits, NEMF mediates CAT tailing by recruiting alanine-charged tRNA to the A-site and directing the elongation of stalled nascent chains independently of mRNA or 40S subunits, leading to non-templated C-terminal alanine extensions (CAT tails). Mainly recruits alanine-charged tRNAs, but can also other amino acid-charged tRNAs. CAT tailing is required to promote ubiquitination of stalled nascent chains by different E3 ubiquitin-protein ligases. In the canonical RQC pathway (RQC-L), CAT tailing facilitates LTN1-dependent ubiquitination by exposing lysine residues that would otherwise remain buried in the ribosomal exit tunnel. In the alternative RQC pathway (RQC-C) CAT tailing creates an C-degron mainly composed of alanine that is recognized by the CRL2(KLHDC10) and RCHY1/PIRH2 E3 ligases, leading to ubiquitination and degradation of stalled nascent chains. NEMF may also indirectly play a role in nuclear export. This Homo sapiens (Human) protein is Ribosome quality control complex subunit NEMF.